Reading from the N-terminus, the 345-residue chain is Anthranilate phosphoribosyltransferase (345 aa).

Residues Gly87, Gly90–Asp91, Thr95, Asn97–Thr100, Lys115–Ser123, and Ser127 contribute to the 5-phospho-alpha-D-ribose 1-diphosphate site. Gly87 is a binding site for anthranilate. Ser99 is a binding site for Mg(2+). Asn118 provides a ligand contact to anthranilate. Residue Arg173 coordinates anthranilate. Mg(2+) contacts are provided by Asp232 and Glu233.

It belongs to the anthranilate phosphoribosyltransferase family. As to quaternary structure, homodimer. Requires Mg(2+) as cofactor.

The enzyme catalyses N-(5-phospho-beta-D-ribosyl)anthranilate + diphosphate = 5-phospho-alpha-D-ribose 1-diphosphate + anthranilate. It participates in amino-acid biosynthesis; L-tryptophan biosynthesis; L-tryptophan from chorismate: step 2/5. In terms of biological role, catalyzes the transfer of the phosphoribosyl group of 5-phosphorylribose-1-pyrophosphate (PRPP) to anthranilate to yield N-(5'-phosphoribosyl)-anthranilate (PRA). The sequence is that of Anthranilate phosphoribosyltransferase from Aeropyrum pernix (strain ATCC 700893 / DSM 11879 / JCM 9820 / NBRC 100138 / K1).